The chain runs to 403 residues: Homoserine O-succinyltransferase (403 aa).

The segment at 1–31 is disordered; it reads MTELQVDPAASADPAAAADTPRHPAATLPPD. Residues 7–26 are compositionally biased toward low complexity; that stretch reads DPAASADPAAAADTPRHPAA. One can recognise an AB hydrolase-1 domain in the interval 74 to 383; the sequence is NAVLICHALN…HGHDAFLLED (310 aa). The Nucleophile role is filled by serine 178. Arginine 248 lines the substrate pocket. Catalysis depends on residues aspartate 343 and histidine 376. Aspartate 377 lines the substrate pocket.

This sequence belongs to the AB hydrolase superfamily. MetX family. In terms of assembly, homodimer.

The protein localises to the cytoplasm. It carries out the reaction L-homoserine + succinyl-CoA = O-succinyl-L-homoserine + CoA. It participates in amino-acid biosynthesis; L-methionine biosynthesis via de novo pathway; O-succinyl-L-homoserine from L-homoserine: step 1/1. In terms of biological role, transfers a succinyl group from succinyl-CoA to L-homoserine, forming succinyl-L-homoserine. The sequence is that of Homoserine O-succinyltransferase from Ralstonia nicotianae (strain ATCC BAA-1114 / GMI1000) (Ralstonia solanacearum).